The chain runs to 349 residues: MNPYVLTILLSSLGLGTILTFASSHWLLAWMGLEINTLAIIPIMAQQSHPRAIEATTKYFLTQATAAAMILFASTTNAWLVGEWEIHQLSHPLATTTVMLALALKLGLAPVHFWLPEVLQGLELTTGLILSTWQKLAPFALMIQVAPTINSSLLIAMGLLSTLVGGWGGLNQTQLRKILAYSSIAHLGWMVLILQYAPSLTLLSLFLYIIMTSSAFLTLKTNNSLTINTLATSWTKSPTLAALTALVLLSLGGLPPLSGFMPKWLILQELTKQGLPLSATLAAMTALLSLYFYLRLCYAMTLTIYPNTLTATAPWRLNFTLITLPLSIITILALGLLPLTPAVTTLLTL.

10 helical membrane-spanning segments follow: residues Pro3–Ser23, His25–Ala45, Ala66–Ile86, Val98–Val118, Ile149–Asn171, Ile178–Ala197, Leu202–Leu219, Leu240–Phe260, Gly274–Leu294, and Phe319–Leu339.

This sequence belongs to the complex I subunit 2 family.

It is found in the mitochondrion inner membrane. It carries out the reaction a ubiquinone + NADH + 5 H(+)(in) = a ubiquinol + NAD(+) + 4 H(+)(out). In terms of biological role, core subunit of the mitochondrial membrane respiratory chain NADH dehydrogenase (Complex I) that is believed to belong to the minimal assembly required for catalysis. Complex I functions in the transfer of electrons from NADH to the respiratory chain. The immediate electron acceptor for the enzyme is believed to be ubiquinone. In Salmo salar (Atlantic salmon), this protein is NADH-ubiquinone oxidoreductase chain 2 (MT-ND2).